The sequence spans 323 residues: Acetyl-coenzyme A carboxylase carboxyl transferase subunit alpha 1 (323 aa).

A CoA carboxyltransferase C-terminal domain is found at 39 to 293 (RLSKKSQQLT…RRALGDSLRQ (255 aa)).

This sequence belongs to the AccA family. As to quaternary structure, acetyl-CoA carboxylase is a heterohexamer composed of biotin carboxyl carrier protein (AccB), biotin carboxylase (AccC) and two subunits each of ACCase subunit alpha (AccA) and ACCase subunit beta (AccD).

Its subcellular location is the cytoplasm. It catalyses the reaction N(6)-carboxybiotinyl-L-lysyl-[protein] + acetyl-CoA = N(6)-biotinyl-L-lysyl-[protein] + malonyl-CoA. Its pathway is lipid metabolism; malonyl-CoA biosynthesis; malonyl-CoA from acetyl-CoA: step 1/1. Its function is as follows. Component of the acetyl coenzyme A carboxylase (ACC) complex. First, biotin carboxylase catalyzes the carboxylation of biotin on its carrier protein (BCCP) and then the CO(2) group is transferred by the carboxyltransferase to acetyl-CoA to form malonyl-CoA. Functionally, does not confer resistance to the endogenous polyketide antibiotic thailandamide, does not confer resistance to thailandamide when expressed in S.typhimurium. The chain is Acetyl-coenzyme A carboxylase carboxyl transferase subunit alpha 1 from Burkholderia thailandensis (strain ATCC 700388 / DSM 13276 / CCUG 48851 / CIP 106301 / E264).